The primary structure comprises 742 residues: Vesicle-fusing ATPase (742 aa).

ATP contacts are provided by residues 499 to 504 (NGMVDC) and 539 to 546 (SGSGKTAL). Thr-544 is a binding site for Mg(2+).

This sequence belongs to the AAA ATPase family. In terms of assembly, homohexamer. Binds to SNARE-SNAP complexes to form 20S particles. Mg(2+) is required as a cofactor.

Its subcellular location is the cytoplasm. The catalysed reaction is ATP + H2O = ADP + phosphate + H(+). Its function is as follows. Required for vesicle-mediated transport. Catalyzes the fusion of transport vesicles within the Golgi cisternae. Is also required for transport from the endoplasmic reticulum to the Golgi stack. Seems to function as a fusion protein required for the delivery of cargo proteins to all compartments of the Golgi stack independent of vesicle origin. Required for maintaining the normal morphology of the Golgi apparatus. The protein is Vesicle-fusing ATPase of Arabidopsis thaliana (Mouse-ear cress).